Consider the following 179-residue polypeptide: Fas apoptotic inhibitory molecule 1 (179 aa).

T2 carries the post-translational modification N-acetylthreonine.

The protein belongs to the FAIM1 family.

Its subcellular location is the cytoplasm. In terms of biological role, plays a role as an inducible effector molecule that mediates Fas resistance produced by surface Ig engagement in B cells. This is Fas apoptotic inhibitory molecule 1 (FAIM) from Homo sapiens (Human).